Here is a 116-residue protein sequence, read N- to C-terminus: Beta-2-microglobulin (116 aa).

Positions 1-19 (MRAIITFALFCVLYITVQA) are cleaved as a signal peptide. The Ig-like C1-type domain maps to 24–111 (PKVQVYSHFP…RHMSNTNAYS (88 aa)). The cysteines at positions 44 and 99 are disulfide-linked.

It belongs to the beta-2-microglobulin family. As to quaternary structure, heterodimer of an alpha chain and a beta chain. Beta-2-microglobulin is the beta-chain of major histocompatibility complex class I molecules.

It localises to the secreted. Component of the class I major histocompatibility complex (MHC). Involved in the presentation of peptide antigens to the immune system. The protein is Beta-2-microglobulin (b2m) of Labeobarbus intermedius (Lake tana barbels).